Consider the following 470-residue polypeptide: Ribulose bisphosphate carboxylase large chain (470 aa).

Substrate-binding residues include Asn-118 and Thr-168. Lys-170 (proton acceptor) is an active-site residue. Lys-172 is a substrate binding site. Positions 196, 198, and 199 each coordinate Mg(2+). At Lys-196 the chain carries N6-carboxylysine. His-289 acts as the Proton acceptor in catalysis. The substrate site is built by Arg-290, His-322, and Ser-374.

It belongs to the RuBisCO large chain family. Type I subfamily. In terms of assembly, heterohexadecamer of 8 large chains and 8 small chains; disulfide-linked. The disulfide link is formed within the large subunit homodimers. RuBisCO interacts with the C-terminus of CcmM, and can be found in complexes that also include carbonic anhydrase (ccaA). RuBisCO associates with both the internal and shell portion of carboxysomes. Mg(2+) is required as a cofactor. Post-translationally, the disulfide bond which can form in the large chain dimeric partners within the hexadecamer appears to be associated with oxidative stress and protein turnover.

Its subcellular location is the carboxysome. It carries out the reaction 2 (2R)-3-phosphoglycerate + 2 H(+) = D-ribulose 1,5-bisphosphate + CO2 + H2O. The catalysed reaction is D-ribulose 1,5-bisphosphate + O2 = 2-phosphoglycolate + (2R)-3-phosphoglycerate + 2 H(+). In terms of biological role, ruBisCO catalyzes two reactions: the carboxylation of D-ribulose 1,5-bisphosphate, the primary event in carbon dioxide fixation, as well as the oxidative fragmentation of the pentose substrate in the photorespiration process. Both reactions occur simultaneously and in competition at the same active site. This is Ribulose bisphosphate carboxylase large chain from Synechocystis sp. (strain ATCC 27184 / PCC 6803 / Kazusa).